Reading from the N-terminus, the 521-residue chain is T-box transcription factor TBX5 (521 aa).

A disordered region spans residues 1–45; the sequence is MADTEEGFGLPSTPVDSEAKELQAEAKQDPQLGTTSKAPTSPQAA. Over residues 17 to 28 the composition is skewed to basic and acidic residues; that stretch reads SEAKELQAEAKQ. Residues 31–45 show a composition bias toward polar residues; sequence QLGTTSKAPTSPQAA. Positions 63–238 form a DNA-binding region, T-box; sequence LWLKFHEVGT…NNPFAKGFRG (176 aa). Disordered stretches follow at residues 254 to 281 and 332 to 352; these read EYPV…TRVL and STTE…EEDP. Residues 262-281 are compositionally biased toward polar residues; that stretch reads TVRQKVSSNHSPFSGETRVL.

As to quaternary structure, monomer. Homodimer (via the T-box); binds DNA as homodimer.

The protein resides in the nucleus. Its subcellular location is the cytoplasm. DNA-binding protein that regulates the transcription of several genes and is involved in heart development and limb pattern formation. May bind to the core DNA motif of promoters. The chain is T-box transcription factor TBX5 (TBX5) from Gallus gallus (Chicken).